We begin with the raw amino-acid sequence, 66 residues long: Large ribosomal subunit protein uL29 (66 aa).

It belongs to the universal ribosomal protein uL29 family.

This chain is Large ribosomal subunit protein uL29, found in Brucella abortus (strain S19).